Consider the following 500-residue polypeptide: L-arabinose isomerase (500 aa).

Residues Glu-306, Glu-333, His-350, and His-450 each coordinate Mn(2+).

The protein belongs to the arabinose isomerase family. Homohexamer. Requires Mn(2+) as cofactor.

The enzyme catalyses beta-L-arabinopyranose = L-ribulose. Its pathway is carbohydrate degradation; L-arabinose degradation via L-ribulose; D-xylulose 5-phosphate from L-arabinose (bacterial route): step 1/3. In terms of biological role, catalyzes the conversion of L-arabinose to L-ribulose. This is L-arabinose isomerase from Yersinia pestis (strain Pestoides F).